A 318-amino-acid polypeptide reads, in one-letter code: tRNA uridine(34) hydroxylase (318 aa).

The Rhodanese domain maps to 123–217 (EDDDTVIIDA…YGKDPETKGE (95 aa)). C177 (cysteine persulfide intermediate) is an active-site residue.

The protein belongs to the TrhO family.

The enzyme catalyses uridine(34) in tRNA + AH2 + O2 = 5-hydroxyuridine(34) in tRNA + A + H2O. In terms of biological role, catalyzes oxygen-dependent 5-hydroxyuridine (ho5U) modification at position 34 in tRNAs. The sequence is that of tRNA uridine(34) hydroxylase from Staphylococcus aureus (strain USA300).